The primary structure comprises 153 residues: HTH-type transcriptional regulator Zrp (153 aa).

The 62-residue stretch at 2-63 folds into the HTH asnC-type domain; it reads IDYRDRHILS…LLDRKKINLP (62 aa). Positions 21 to 40 form a DNA-binding region, H-T-H motif; sequence LAEIAERVALSVSACSRRVA.

The protein is HTH-type transcriptional regulator Zrp (zrp) of Zymomonas mobilis subsp. mobilis (strain ATCC 10988 / DSM 424 / LMG 404 / NCIMB 8938 / NRRL B-806 / ZM1).